A 983-amino-acid chain; its full sequence is Glycine dehydrogenase (decarboxylating) (983 aa).

Lys-726 is modified (N6-(pyridoxal phosphate)lysine).

It belongs to the GcvP family. The glycine cleavage system is composed of four proteins: P, T, L and H. Pyridoxal 5'-phosphate serves as cofactor.

It catalyses the reaction N(6)-[(R)-lipoyl]-L-lysyl-[glycine-cleavage complex H protein] + glycine + H(+) = N(6)-[(R)-S(8)-aminomethyldihydrolipoyl]-L-lysyl-[glycine-cleavage complex H protein] + CO2. In terms of biological role, the glycine cleavage system catalyzes the degradation of glycine. The P protein binds the alpha-amino group of glycine through its pyridoxal phosphate cofactor; CO(2) is released and the remaining methylamine moiety is then transferred to the lipoamide cofactor of the H protein. In Synechocystis sp. (strain ATCC 27184 / PCC 6803 / Kazusa), this protein is Glycine dehydrogenase (decarboxylating).